A 309-amino-acid chain; its full sequence is UDP-N-acetylenolpyruvoylglucosamine reductase (309 aa).

The FAD-binding PCMH-type domain occupies R34–I221. R179 is a catalytic residue. The Proton donor role is filled by S228. E298 is an active-site residue.

It belongs to the MurB family. The cofactor is FAD.

It localises to the cytoplasm. The enzyme catalyses UDP-N-acetyl-alpha-D-muramate + NADP(+) = UDP-N-acetyl-3-O-(1-carboxyvinyl)-alpha-D-glucosamine + NADPH + H(+). It participates in cell wall biogenesis; peptidoglycan biosynthesis. Its function is as follows. Cell wall formation. The protein is UDP-N-acetylenolpyruvoylglucosamine reductase of Methylorubrum extorquens (strain CM4 / NCIMB 13688) (Methylobacterium extorquens).